A 613-amino-acid chain; its full sequence is MKKAKLIFKDNTPFSLDFDDFYFNSKDGLNESKFVYTHSFEWKNQENFIIAESGFGIGLNFFLTLKRFLQTTPSKRPKKLFYISIEAFYIEKEQLREIYQKLGFYEEFKELLEQFLKFYPKAKEGIYRFYFEDCFLDLVFEDITILKELDFKADIWYLDGFSPNKNSQMFDENLIFEVARLSKKNTQICTFSSASFLQKNLKKYGFRVEKTKGFRKREMIKAYLENELEFKDKEAYFSRTFSSLKNKKVAIIGAGISSAVLAYELSLRGFEIDVFEKHLELGKGASGNESGILSSLILKPKVNLGEFSELSFIEASRFYRQILDLEFKGVVEFAHNDLMQERFDTQRENVLFKISKNQAFLEEGGVIFPKNLVKNLFEKSKACIYFNHEFQAYKFENECFTLKFKNDIVKSDYAVLIYAMGADTKDFVFYDEMKLSKVRGQVTHLKPFLNTPFPLSSKAYICPVKDDLQVIGASYDRLDASLESKEEDDKQNIENIAEFIDKNTKLEIIGSKVGFRSYSSDRFMIVGNAYDEVFYKEEYKALLWTKNKEQKLAKISCNLYFNFAHGSRGFSTSVLAARYLCALINNEPLYLEKKYIHAIHPARFLIRKLKKGL.

The interval 1-225 is tRNA (mnm(5)s(2)U34)-methyltransferase; the sequence is MKKAKLIFKD…KREMIKAYLE (225 aa). Residues 252–613 are FAD-dependent cmnm(5)s(2)U34 oxidoreductase; sequence IGAGISSAVL…FLIRKLKKGL (362 aa).

The protein in the N-terminal section; belongs to the methyltransferase superfamily. tRNA (mnm(5)s(2)U34)-methyltransferase family. In the C-terminal section; belongs to the DAO family. Requires FAD as cofactor.

Its subcellular location is the cytoplasm. The enzyme catalyses 5-aminomethyl-2-thiouridine(34) in tRNA + S-adenosyl-L-methionine = 5-methylaminomethyl-2-thiouridine(34) in tRNA + S-adenosyl-L-homocysteine + H(+). In terms of biological role, catalyzes the last two steps in the biosynthesis of 5-methylaminomethyl-2-thiouridine (mnm(5)s(2)U) at the wobble position (U34) in tRNA. Catalyzes the FAD-dependent demodification of cmnm(5)s(2)U34 to nm(5)s(2)U34, followed by the transfer of a methyl group from S-adenosyl-L-methionine to nm(5)s(2)U34, to form mnm(5)s(2)U34. This chain is tRNA 5-methylaminomethyl-2-thiouridine biosynthesis bifunctional protein MnmC, found in Campylobacter jejuni subsp. jejuni serotype O:6 (strain 81116 / NCTC 11828).